A 103-amino-acid polypeptide reads, in one-letter code: Large ribosomal subunit protein uL22c (103 aa).

Belongs to the universal ribosomal protein uL22 family. Part of the 50S ribosomal subunit.

Its subcellular location is the plastid. The protein resides in the chloroplast. In terms of biological role, this protein binds specifically to 23S rRNA. Functionally, the globular domain of the protein is located near the polypeptide exit tunnel on the outside of the subunit, while an extended beta-hairpin is found that lines the wall of the exit tunnel in the center of the 70S ribosome. This chain is Large ribosomal subunit protein uL22c (rpl22), found in Cyanidium caldarium (Red alga).